Reading from the N-terminus, the 167-residue chain is Gametocyte-specific factor 1 (167 aa).

2 consecutive CHHC U11-48K-type zinc fingers follow at residues 14 to 41 and 48 to 75; these read LLQCPYDKNHQIRACRFPYHLIKCRKNH and LATCPFNARHQVPRAEISHHISSCDDKS. Zn(2+) is bound by residues Cys-17, His-23, His-33, Cys-37, Cys-51, His-57, His-67, and Cys-71.

This sequence belongs to the UPF0224 (FAM112) family.

The protein resides in the cytoplasm. Its function is as follows. Required for spermatogenesis and is involved in the suppression of retrotransposon transcription in male germ cells. The chain is Gametocyte-specific factor 1 (GTSF1) from Bos taurus (Bovine).